The following is a 548-amino-acid chain: Chaperonin GroEL (548 aa).

ATP is bound by residues 29-32, K50, 86-90, G414, and D493; these read THGP and DGTTT.

It belongs to the chaperonin (HSP60) family. Forms a cylinder of 14 subunits composed of two heptameric rings stacked back-to-back. Interacts with the co-chaperonin GroES.

It is found in the cytoplasm. It catalyses the reaction ATP + H2O + a folded polypeptide = ADP + phosphate + an unfolded polypeptide.. Functionally, together with its co-chaperonin GroES, plays an essential role in assisting protein folding. The GroEL-GroES system forms a nano-cage that allows encapsulation of the non-native substrate proteins and provides a physical environment optimized to promote and accelerate protein folding. The chain is Chaperonin GroEL from Desulfatibacillum aliphaticivorans.